Reading from the N-terminus, the 214-residue chain is uncharacterized protein (214 aa).

URF2 product may be involved in the transfer of iron-sulfur clusters to the NADH dehydrogenase complex. It may also be required for the assembly of the NADH dehydrogenase complex. This is an uncharacterized protein from Paracoccus denitrificans.